Here is a 32-residue protein sequence, read N- to C-terminus: Conotoxin sr7a (32 aa).

3 disulfides stabilise this stretch: Cys1–Cys17, Cys8–Cys21, and Cys16–Cys31. Residue Ser32 is modified to Serine amide.

As to expression, expressed by the venom duct.

It is found in the secreted. Elicits hyperactivity when injected intracranially into mice and produces paralysis when injected into the pedal muscle of freshwater snails, Pomacea paludosa, but it has no apparent effect after intramuscular injection into the limpet Patella opea or the freshwater fish Lebistes reticulatus. The chain is Conotoxin sr7a from Conus spurius (Alphabet cone).